The sequence spans 572 residues: Phosphoenolpyruvate-protein phosphotransferase (572 aa).

H191 (tele-phosphohistidine intermediate) is an active-site residue. Residues R298 and R334 each contribute to the phosphoenolpyruvate site. E433 and D457 together coordinate Mg(2+). Phosphoenolpyruvate-binding positions include 456-457 (ND) and R467. C504 (proton donor) is an active-site residue.

Belongs to the PEP-utilizing enzyme family. As to quaternary structure, homodimer. Mg(2+) is required as a cofactor.

The protein localises to the cytoplasm. It catalyses the reaction L-histidyl-[protein] + phosphoenolpyruvate = N(pros)-phospho-L-histidyl-[protein] + pyruvate. Functionally, general (non sugar-specific) component of the phosphoenolpyruvate-dependent sugar phosphotransferase system (sugar PTS). This major carbohydrate active-transport system catalyzes the phosphorylation of incoming sugar substrates concomitantly with their translocation across the cell membrane. Enzyme I transfers the phosphoryl group from phosphoenolpyruvate (PEP) to the phosphoryl carrier protein (HPr). This Staphylococcus aureus (strain MSSA476) protein is Phosphoenolpyruvate-protein phosphotransferase.